The following is a 599-amino-acid chain: Putative ATP-dependent helicase YeeB (599 aa).

Positions 30–207 (AFEKRNSQYL…LLPEDEELFD (178 aa)) constitute a Helicase ATP-binding domain. Residue 43-50 (APPASGKS) participates in ATP binding. A DEAH box motif is present at residues 154-157 (DEFH). Residues 236-408 (QYTSAINEVL…TVNTMLKAIS (173 aa)) form the Helicase C-terminal domain.

This sequence belongs to the helicase family.

This chain is Putative ATP-dependent helicase YeeB (yeeB), found in Bacillus subtilis (strain 168).